The sequence spans 132 residues: Small ribosomal subunit protein uS11c (132 aa).

It belongs to the universal ribosomal protein uS11 family. Part of the 30S ribosomal subunit.

Its subcellular location is the plastid. The protein localises to the chloroplast. The polypeptide is Small ribosomal subunit protein uS11c (Gnetum parvifolium (Small-leaved jointfir)).